The following is a 332-amino-acid chain: Ribosomal RNA small subunit methyltransferase H (332 aa).

Residues 42 to 44, aspartate 62, phenylalanine 86, aspartate 105, and glutamine 112 each bind S-adenosyl-L-methionine; that span reads GGH.

It belongs to the methyltransferase superfamily. RsmH family.

The protein localises to the cytoplasm. The catalysed reaction is cytidine(1402) in 16S rRNA + S-adenosyl-L-methionine = N(4)-methylcytidine(1402) in 16S rRNA + S-adenosyl-L-homocysteine + H(+). Specifically methylates the N4 position of cytidine in position 1402 (C1402) of 16S rRNA. The protein is Ribosomal RNA small subunit methyltransferase H of Cupriavidus pinatubonensis (strain JMP 134 / LMG 1197) (Cupriavidus necator (strain JMP 134)).